Here is a 311-residue protein sequence, read N- to C-terminus: Putative dihydroorotate dehydrogenase A (fumarate) (311 aa).

Residues lysine 45, 69-73 (NSMGL), and asparagine 128 each bind substrate. 45 to 46 (KT) is a binding site for FMN. Asparagine 128 lines the FMN pocket. Cysteine 131 serves as the catalytic Nucleophile. Residues lysine 165 and valine 193 each coordinate FMN. 194–195 (NS) is a binding site for substrate. FMN-binding positions include glycine 220, 248-249 (GG), and 270-271 (GT).

Belongs to the dihydroorotate dehydrogenase family. Type 1 subfamily. In terms of assembly, homodimer. FMN serves as cofactor.

The protein localises to the cytoplasm. The enzyme catalyses (S)-dihydroorotate + fumarate = orotate + succinate. Its pathway is pyrimidine metabolism; UMP biosynthesis via de novo pathway. In terms of biological role, catalyzes the conversion of dihydroorotate to orotate with fumarate as the electron acceptor. The sequence is that of Putative dihydroorotate dehydrogenase A (fumarate) (pyrD) from Streptococcus pyogenes serotype M1.